The primary structure comprises 418 residues: Putative methylthiotransferase jhp_0270 (418 aa).

One can recognise an MTTase N-terminal domain in the interval 2–110 (KKVYFKTFGC…INALLQEKKR (109 aa)). Residues cysteine 11, cysteine 45, cysteine 74, cysteine 144, cysteine 148, and cysteine 151 each contribute to the [4Fe-4S] cluster site. In terms of domain architecture, Radical SAM core spans 130 to 355 (FVGKTRAFIK…KDLIFHKNKA (226 aa)).

It belongs to the methylthiotransferase family. The cofactor is [4Fe-4S] cluster.

This is Putative methylthiotransferase jhp_0270 from Helicobacter pylori (strain J99 / ATCC 700824) (Campylobacter pylori J99).